Consider the following 255-residue polypeptide: Coenzyme F420:L-glutamate ligase (255 aa).

GTP is bound by residues 11–14, 40–41, and K45; these read IPLI and ST. Position 109 (D109) interacts with a divalent metal cation. GTP is bound at residue N112. A divalent metal cation contacts are provided by D150, T151, and E208. Residue 206 to 213 coordinates GTP; that stretch reads MGEGAGGT.

It belongs to the CofE family. As to quaternary structure, homodimer. Mg(2+) serves as cofactor. Mn(2+) is required as a cofactor. The cofactor is K(+).

The enzyme catalyses oxidized coenzyme F420-0 + GTP + L-glutamate = oxidized coenzyme F420-1 + GDP + phosphate + H(+). The catalysed reaction is oxidized coenzyme F420-1 + GTP + L-glutamate = oxidized coenzyme F420-2 + GDP + phosphate + H(+). It participates in cofactor biosynthesis; coenzyme F420 biosynthesis. In terms of biological role, catalyzes the GTP-dependent successive addition of two or more gamma-linked L-glutamates to the L-lactyl phosphodiester of 7,8-didemethyl-8-hydroxy-5-deazariboflavin (F420-0) to form coenzyme F420-0-glutamyl-glutamate (F420-2) or polyglutamated F420 derivatives. The polypeptide is Coenzyme F420:L-glutamate ligase (Methanosarcina barkeri (strain Fusaro / DSM 804)).